The following is a 195-amino-acid chain: Glycine-rich protein A3 (195 aa).

Disordered regions lie at residues 23–103 (AGGG…GVAG) and 159–182 (VMESLSRESTGRARSTDTRSGSNL). A compositionally biased stretch (gly residues) spans 47–77 (PAGGGYPPQGYPPAGGGYPPQGYPPAGGGYP). The segment covering 82-94 (PPAGHHSGSSAPH) has biased composition (low complexity). A compositionally biased stretch (basic and acidic residues) spans 163–175 (LSRESTGRARSTD).

This is Glycine-rich protein A3 from Daucus carota (Wild carrot).